A 563-amino-acid chain; its full sequence is Benzaldehyde lyase (563 aa).

Belongs to the TPP enzyme family. A metal cation is required as a cofactor. It depends on thiamine diphosphate as a cofactor.

It catalyses the reaction benzoin = 2 benzaldehyde. Its function is as follows. Cleavage of benzoin-anisoin acyloin linkage. The protein is Benzaldehyde lyase (bznB) of Pseudomonas fluorescens.